Reading from the N-terminus, the 172-residue chain is Adenine phosphoribosyltransferase (172 aa).

It belongs to the purine/pyrimidine phosphoribosyltransferase family. Homodimer.

Its subcellular location is the cytoplasm. The catalysed reaction is AMP + diphosphate = 5-phospho-alpha-D-ribose 1-diphosphate + adenine. Its pathway is purine metabolism; AMP biosynthesis via salvage pathway; AMP from adenine: step 1/1. In terms of biological role, catalyzes a salvage reaction resulting in the formation of AMP, that is energically less costly than de novo synthesis. This Exiguobacterium sp. (strain ATCC BAA-1283 / AT1b) protein is Adenine phosphoribosyltransferase.